A 141-amino-acid chain; its full sequence is Large-conductance mechanosensitive channel (141 aa).

3 consecutive transmembrane segments (helical) span residues 17–37 (MDLA…ASIV), 40–60 (LIMP…LFIA), and 86–106 (GNFV…FIIV).

Belongs to the MscL family. Homopentamer.

The protein resides in the cell inner membrane. In terms of biological role, channel that opens in response to stretch forces in the membrane lipid bilayer. May participate in the regulation of osmotic pressure changes within the cell. This chain is Large-conductance mechanosensitive channel, found in Thiobacillus denitrificans (strain ATCC 25259 / T1).